Reading from the N-terminus, the 313-residue chain is Malate dehydrogenase (313 aa).

NAD(+) contacts are provided by residues 11-16 (GAGSIG) and Asp35. Substrate contacts are provided by Arg84 and Arg90. NAD(+)-binding positions include Asn97 and 120 to 122 (VTN). Substrate-binding residues include Asn122 and Arg153. The Proton acceptor role is filled by His177.

This sequence belongs to the LDH/MDH superfamily. MDH type 3 family.

It carries out the reaction (S)-malate + NAD(+) = oxaloacetate + NADH + H(+). Its function is as follows. Catalyzes the reversible oxidation of malate to oxaloacetate. The polypeptide is Malate dehydrogenase (Ehrlichia chaffeensis (strain ATCC CRL-10679 / Arkansas)).